The sequence spans 337 residues: Holliday junction branch migration complex subunit RuvB (337 aa).

The segment at 1 to 179 (MTHQVSVLHQ…FSFTGRMSYY (179 aa)) is large ATPase domain (RuvB-L). ATP contacts are provided by residues Leu-18, Arg-19, Gly-60, Lys-63, Thr-64, Ser-65, 126 to 128 (EDY), Arg-169, Tyr-179, and Arg-216. Thr-64 provides a ligand contact to Mg(2+). Residues 180 to 250 (SDEDLTTILK…VAEKALAMLL (71 aa)) are small ATPAse domain (RuvB-S). A head domain (RuvB-H) region spans residues 253–337 (DWGLNEIDIK…DNLQSLGEEK (85 aa)). Residues Lys-308 and Arg-313 each coordinate DNA.

It belongs to the RuvB family. Homohexamer. Forms an RuvA(8)-RuvB(12)-Holliday junction (HJ) complex. HJ DNA is sandwiched between 2 RuvA tetramers; dsDNA enters through RuvA and exits via RuvB. An RuvB hexamer assembles on each DNA strand where it exits the tetramer. Each RuvB hexamer is contacted by two RuvA subunits (via domain III) on 2 adjacent RuvB subunits; this complex drives branch migration. In the full resolvosome a probable DNA-RuvA(4)-RuvB(12)-RuvC(2) complex forms which resolves the HJ.

It is found in the cytoplasm. It catalyses the reaction ATP + H2O = ADP + phosphate + H(+). Functionally, the RuvA-RuvB-RuvC complex processes Holliday junction (HJ) DNA during genetic recombination and DNA repair, while the RuvA-RuvB complex plays an important role in the rescue of blocked DNA replication forks via replication fork reversal (RFR). RuvA specifically binds to HJ cruciform DNA, conferring on it an open structure. The RuvB hexamer acts as an ATP-dependent pump, pulling dsDNA into and through the RuvAB complex. RuvB forms 2 homohexamers on either side of HJ DNA bound by 1 or 2 RuvA tetramers; 4 subunits per hexamer contact DNA at a time. Coordinated motions by a converter formed by DNA-disengaged RuvB subunits stimulates ATP hydrolysis and nucleotide exchange. Immobilization of the converter enables RuvB to convert the ATP-contained energy into a lever motion, pulling 2 nucleotides of DNA out of the RuvA tetramer per ATP hydrolyzed, thus driving DNA branch migration. The RuvB motors rotate together with the DNA substrate, which together with the progressing nucleotide cycle form the mechanistic basis for DNA recombination by continuous HJ branch migration. Branch migration allows RuvC to scan DNA until it finds its consensus sequence, where it cleaves and resolves cruciform DNA. This Chlamydia caviae (strain ATCC VR-813 / DSM 19441 / 03DC25 / GPIC) (Chlamydophila caviae) protein is Holliday junction branch migration complex subunit RuvB.